The following is a 429-amino-acid chain: Serine--tRNA ligase (429 aa).

L-serine is bound at residue Thr-236–Glu-238. ATP is bound at residue Arg-267–Glu-269. Glu-290 lines the L-serine pocket. Glu-354–Ser-357 is an ATP binding site. Residue Ser-390 participates in L-serine binding.

The protein belongs to the class-II aminoacyl-tRNA synthetase family. Type-1 seryl-tRNA synthetase subfamily. In terms of assembly, homodimer. The tRNA molecule binds across the dimer.

The protein resides in the cytoplasm. It carries out the reaction tRNA(Ser) + L-serine + ATP = L-seryl-tRNA(Ser) + AMP + diphosphate + H(+). It catalyses the reaction tRNA(Sec) + L-serine + ATP = L-seryl-tRNA(Sec) + AMP + diphosphate + H(+). The protein operates within aminoacyl-tRNA biosynthesis; selenocysteinyl-tRNA(Sec) biosynthesis; L-seryl-tRNA(Sec) from L-serine and tRNA(Sec): step 1/1. Functionally, catalyzes the attachment of serine to tRNA(Ser). Is also able to aminoacylate tRNA(Sec) with serine, to form the misacylated tRNA L-seryl-tRNA(Sec), which will be further converted into selenocysteinyl-tRNA(Sec). The chain is Serine--tRNA ligase from Wigglesworthia glossinidia brevipalpis.